A 264-amino-acid polypeptide reads, in one-letter code: Phosphoinositide-3-kinase-interacting protein 1 (264 aa).

A signal peptide spans Met-1–Gly-21. At Ser-22 to Leu-170 the chain is on the extracellular side. In terms of domain architecture, Kringle spans Gly-24 to Cys-101. 3 disulfide bridges follow: Cys-25–Cys-101, Cys-46–Cys-82, and Cys-70–Cys-96. Residues Arg-94–Ala-129 are disordered. Positions Leu-117 to Ala-129 are enriched in basic and acidic residues. A helical transmembrane segment spans residues Gly-171–Val-191. The Cytoplasmic portion of the chain corresponds to Gly-192–Ala-264.

The protein resides in the cell membrane. In terms of biological role, negative regulator of hepatic phosphatidylinositol 3-kinase (PI3K) activity. The chain is Phosphoinositide-3-kinase-interacting protein 1 (Pik3ip1) from Mus musculus (Mouse).